Consider the following 261-residue polypeptide: Endonuclease NucS (261 aa).

Belongs to the NucS endonuclease family.

It is found in the cytoplasm. Functionally, cleaves both 3' and 5' ssDNA extremities of branched DNA structures. This Aeropyrum pernix (strain ATCC 700893 / DSM 11879 / JCM 9820 / NBRC 100138 / K1) protein is Endonuclease NucS.